The chain runs to 117 residues: Large ribosomal subunit protein uL22c (117 aa).

It belongs to the universal ribosomal protein uL22 family. In terms of assembly, part of the 50S ribosomal subunit.

It localises to the plastid. The protein resides in the chloroplast. This protein binds specifically to 23S rRNA. Functionally, the globular domain of the protein is located near the polypeptide exit tunnel on the outside of the subunit, while an extended beta-hairpin is found that lines the wall of the exit tunnel in the center of the 70S ribosome. This chain is Large ribosomal subunit protein uL22c (rpl22), found in Pyropia yezoensis (Susabi-nori).